A 305-amino-acid polypeptide reads, in one-letter code: Putative cuticle collagen 90 (305 aa).

2 disordered regions span residues 95 to 117 (AGPP…GDLG) and 146 to 305 (PPGQ…AKRH). Triple-helical region stretches follow at residues 96–125 (GPPG…SGIS), 142–204 (GPAG…PGTA), 208–252 (GAVG…NGRD), and 256–270 (GQPG…VGKD). A compositionally biased stretch (low complexity) spans 150-162 (QGPVGPQGFPGVV). The segment covering 278-288 (ARRDSKTESVH) has biased composition (basic and acidic residues).

Belongs to the cuticular collagen family. In terms of assembly, collagen polypeptide chains are complexed within the cuticle by disulfide bonds and other types of covalent cross-links.

Its function is as follows. Nematode cuticles are composed largely of collagen-like proteins. The cuticle functions both as an exoskeleton and as a barrier to protect the worm from its environment. The chain is Putative cuticle collagen 90 (col-90) from Caenorhabditis elegans.